The primary structure comprises 269 residues: GATA zinc finger domain-containing protein 1 (269 aa).

Residues 9–33 form a GATA-type zinc finger; the sequence is CSVCKTTSSSMWKKGAQGEILCHHC. The disordered stretch occupies residues 63–115; sequence ATFASTSATPPQSNGGGGGKQSKQEIHRRSARLRNTKYKSAPAAEKKVSTKGK. A Glycyl lysine isopeptide (Lys-Gly) (interchain with G-Cter in SUMO2) cross-link involves residue Lys-262.

Component of a chromatin complex, at least composed of KDM5A, GATAD1 and EMSY. In terms of tissue distribution, ubiquitously expressed among various tissue types. Expressed in left ventricular myocytes.

The protein resides in the nucleus. Its function is as follows. Component of some chromatin complex recruited to chromatin sites methylated 'Lys-4' of histone H3 (H3K4me), with a preference for trimethylated form (H3K4me3). This is GATA zinc finger domain-containing protein 1 (GATAD1) from Homo sapiens (Human).